Consider the following 280-residue polypeptide: Ribosomal RNA small subunit methyltransferase A (280 aa).

Residues Leu-24, Gly-49, Glu-70, Asp-95, and Asn-118 each contribute to the S-adenosyl-L-methionine site.

The protein belongs to the class I-like SAM-binding methyltransferase superfamily. rRNA adenine N(6)-methyltransferase family. RsmA subfamily.

The protein resides in the cytoplasm. The enzyme catalyses adenosine(1518)/adenosine(1519) in 16S rRNA + 4 S-adenosyl-L-methionine = N(6)-dimethyladenosine(1518)/N(6)-dimethyladenosine(1519) in 16S rRNA + 4 S-adenosyl-L-homocysteine + 4 H(+). Its function is as follows. Specifically dimethylates two adjacent adenosines (A1518 and A1519) in the loop of a conserved hairpin near the 3'-end of 16S rRNA in the 30S particle. May play a critical role in biogenesis of 30S subunits. This is Ribosomal RNA small subunit methyltransferase A from Syntrophus aciditrophicus (strain SB).